We begin with the raw amino-acid sequence, 278 residues long: Antiviral protein MAP (278 aa).

A signal peptide spans 1-28; that stretch reads MLTTTKVFFLLLTTWITWYAIVNPQSRA. Cysteines 64 and 248 form a disulfide. Residue Glu-196 is part of the active site.

It carries out the reaction Endohydrolysis of the N-glycosidic bond at one specific adenosine on the 28S rRNA.. In terms of biological role, inhibits viral infection of plants, and protein synthesis in vitro. This is Antiviral protein MAP from Mirabilis jalapa (Garden four-o'clock).